Here is a 344-residue protein sequence, read N- to C-terminus: Anthranilate phosphoribosyltransferase (344 aa).

Residues G85, 88-89, T93, 95-98, 113-121, and S125 each bind 5-phospho-alpha-D-ribose 1-diphosphate; these read GD, NIST, and KHGNRSVSS. G85 serves as a coordination point for anthranilate. S97 is a Mg(2+) binding site. Residue N116 participates in anthranilate binding. R171 contributes to the anthranilate binding site. 2 residues coordinate Mg(2+): D229 and E230.

It belongs to the anthranilate phosphoribosyltransferase family. Homodimer. Requires Mg(2+) as cofactor.

It carries out the reaction N-(5-phospho-beta-D-ribosyl)anthranilate + diphosphate = 5-phospho-alpha-D-ribose 1-diphosphate + anthranilate. The protein operates within amino-acid biosynthesis; L-tryptophan biosynthesis; L-tryptophan from chorismate: step 2/5. Its function is as follows. Catalyzes the transfer of the phosphoribosyl group of 5-phosphorylribose-1-pyrophosphate (PRPP) to anthranilate to yield N-(5'-phosphoribosyl)-anthranilate (PRA). This chain is Anthranilate phosphoribosyltransferase, found in Shewanella amazonensis (strain ATCC BAA-1098 / SB2B).